A 426-amino-acid polypeptide reads, in one-letter code: Citrate synthase (426 aa).

Catalysis depends on residues histidine 314 and aspartate 372.

The protein belongs to the citrate synthase family.

It catalyses the reaction oxaloacetate + acetyl-CoA + H2O = citrate + CoA + H(+). The protein operates within carbohydrate metabolism; tricarboxylic acid cycle; isocitrate from oxaloacetate: step 1/2. The chain is Citrate synthase (gltA) from Helicobacter pylori (strain J99 / ATCC 700824) (Campylobacter pylori J99).